Reading from the N-terminus, the 407-residue chain is Imidazolonepropionase (407 aa).

His-68 and His-70 together coordinate Fe(3+). Residues His-68 and His-70 each coordinate Zn(2+). 4-imidazolone-5-propanoate is bound by residues Arg-77, Tyr-140, and His-173. Tyr-140 contributes to the N-formimidoyl-L-glutamate binding site. Fe(3+) is bound at residue His-238. His-238 lines the Zn(2+) pocket. Gln-241 provides a ligand contact to 4-imidazolone-5-propanoate. Residue Asp-313 participates in Fe(3+) binding. A Zn(2+)-binding site is contributed by Asp-313. N-formimidoyl-L-glutamate-binding residues include Asn-315 and Gly-317. Thr-318 is a 4-imidazolone-5-propanoate binding site.

This sequence belongs to the metallo-dependent hydrolases superfamily. HutI family. Zn(2+) serves as cofactor. Requires Fe(3+) as cofactor.

Its subcellular location is the cytoplasm. It catalyses the reaction 4-imidazolone-5-propanoate + H2O = N-formimidoyl-L-glutamate. The protein operates within amino-acid degradation; L-histidine degradation into L-glutamate; N-formimidoyl-L-glutamate from L-histidine: step 3/3. Catalyzes the hydrolytic cleavage of the carbon-nitrogen bond in imidazolone-5-propanoate to yield N-formimidoyl-L-glutamate. It is the third step in the universal histidine degradation pathway. This Burkholderia lata (strain ATCC 17760 / DSM 23089 / LMG 22485 / NCIMB 9086 / R18194 / 383) protein is Imidazolonepropionase.